Reading from the N-terminus, the 219-residue chain is Regulatory protein YeiL (219 aa).

Residues 19-97 (RLFHFLARDY…IEECWCLALP (79 aa)) are sensory domain. [4Fe-4S] cluster contacts are provided by Cys68, Cys91, Cys93, and Cys116. Positions 111-131 (FLRKLCVTLSHKNYRNIVSLT) are dimer interface. Residues 136–199 (FPLVNRLAAF…KKGYLIKNRK (64 aa)) enclose the HTH crp-type domain. A DNA-binding region (H-T-H motif) is located at residues 158–181 (KHTQAAEYLGVSYRHLLYVLAQFI).

In terms of assembly, homodimer. [4Fe-4S] cluster is required as a cofactor.

The protein localises to the cytoplasm. Transcription regulator involved in mid-term, stationary-phase viability under nitrogen starvation. Might control expression of the salvage pathways or in some other way repress the recycling of nucleobases to nucleic acids and enhance their use as general nitrogen sources during nitrogen-limited growth. The protein is Regulatory protein YeiL (yeiL) of Escherichia coli O157:H7.